We begin with the raw amino-acid sequence, 193 residues long: Large ribosomal subunit protein uL18 (193 aa).

Belongs to the universal ribosomal protein uL18 family. Part of the 50S ribosomal subunit. Contacts the 5S and 23S rRNAs.

This is one of the proteins that bind and probably mediate the attachment of the 5S RNA into the large ribosomal subunit, where it forms part of the central protuberance. In Methanosphaera stadtmanae (strain ATCC 43021 / DSM 3091 / JCM 11832 / MCB-3), this protein is Large ribosomal subunit protein uL18.